We begin with the raw amino-acid sequence, 166 residues long: UPF0304 protein VF_1794 (166 aa).

Belongs to the UPF0304 family.

In Aliivibrio fischeri (strain ATCC 700601 / ES114) (Vibrio fischeri), this protein is UPF0304 protein VF_1794.